We begin with the raw amino-acid sequence, 335 residues long: Pyridoxal 5'-phosphate synthase subunit PdxS (335 aa).

D59 provides a ligand contact to D-ribose 5-phosphate. The Schiff-base intermediate with D-ribose 5-phosphate role is filled by K116. G188 serves as a coordination point for D-ribose 5-phosphate. K200 contacts D-glyceraldehyde 3-phosphate. Residues G253 and 274 to 275 contribute to the D-ribose 5-phosphate site; that span reads GS.

It belongs to the PdxS/SNZ family. In the presence of PdxT, forms a dodecamer of heterodimers.

The enzyme catalyses aldehydo-D-ribose 5-phosphate + D-glyceraldehyde 3-phosphate + L-glutamine = pyridoxal 5'-phosphate + L-glutamate + phosphate + 3 H2O + H(+). It participates in cofactor biosynthesis; pyridoxal 5'-phosphate biosynthesis. Catalyzes the formation of pyridoxal 5'-phosphate from ribose 5-phosphate (RBP), glyceraldehyde 3-phosphate (G3P) and ammonia. The ammonia is provided by the PdxT subunit. Can also use ribulose 5-phosphate and dihydroxyacetone phosphate as substrates, resulting from enzyme-catalyzed isomerization of RBP and G3P, respectively. The sequence is that of Pyridoxal 5'-phosphate synthase subunit PdxS from Desulfurococcus amylolyticus (strain DSM 18924 / JCM 16383 / VKM B-2413 / 1221n) (Desulfurococcus kamchatkensis).